Reading from the N-terminus, the 225-residue chain is Golgi to ER traffic protein 1 (225 aa).

Position 1 (Met-1) is a topological domain, lumenal. The chain crosses the membrane as a helical span at residues 2 to 21; the sequence is NWVIIAALFFVIINKLLQYT. Over 22–107 the chain is Cytoplasmic; sequence SRYQEAWINK…SQSKLFNRLK (86 aa). Residues 37–104 are a coiled coil; the sequence is DISSLSKEYS…AKDSQSKLFN (68 aa). Residues 108 to 128 traverse the membrane as a helical segment; the sequence is LLTLTLPFMILKLWKGKFIVY. Residues 129 to 172 are Lumenal-facing; sequence DIPTKDTFPVIVNGVLSQGLLYIPLLPINFLRGIDPNKHILVPG. Residues 173–189 traverse the membrane as a helical segment; the sequence is VSLGIWLMALTKTIDTV. Residues 190 to 225 are Cytoplasmic-facing; the sequence is EFIVKQLVFQPVVSKQVKEKTKEKVVELKTTEAELD.

This sequence belongs to the WRB/GET1 family. In terms of assembly, component of the Golgi to ER traffic (GET) complex, which is composed of GET1, GET2 and GET3. Within the complex, GET1 and GET2 form a heterotetramer which is stabilized by phosphatidylinositol binding and which binds to the GET3 homodimer.

Its subcellular location is the endoplasmic reticulum membrane. The protein resides in the golgi apparatus membrane. In terms of biological role, required for the post-translational delivery of tail-anchored (TA) proteins to the endoplasmic reticulum. Together with GET2, acts as a membrane receptor for soluble GET3, which recognizes and selectively binds the transmembrane domain of TA proteins in the cytosol. The GET complex cooperates with the HDEL receptor ERD2 to mediate the ATP-dependent retrieval of resident ER proteins that contain a C-terminal H-D-E-L retention signal from the Golgi to the ER. The chain is Golgi to ER traffic protein 1 from Vanderwaltozyma polyspora (strain ATCC 22028 / DSM 70294 / BCRC 21397 / CBS 2163 / NBRC 10782 / NRRL Y-8283 / UCD 57-17) (Kluyveromyces polysporus).